We begin with the raw amino-acid sequence, 244 residues long: 1-(5-phosphoribosyl)-5-[(5-phosphoribosylamino)methylideneamino] imidazole-4-carboxamide isomerase (244 aa).

Aspartate 10 (proton acceptor) is an active-site residue. Catalysis depends on aspartate 132, which acts as the Proton donor.

The protein belongs to the HisA/HisF family.

It localises to the cytoplasm. The catalysed reaction is 1-(5-phospho-beta-D-ribosyl)-5-[(5-phospho-beta-D-ribosylamino)methylideneamino]imidazole-4-carboxamide = 5-[(5-phospho-1-deoxy-D-ribulos-1-ylimino)methylamino]-1-(5-phospho-beta-D-ribosyl)imidazole-4-carboxamide. Its pathway is amino-acid biosynthesis; L-histidine biosynthesis; L-histidine from 5-phospho-alpha-D-ribose 1-diphosphate: step 4/9. In Xanthomonas euvesicatoria pv. vesicatoria (strain 85-10) (Xanthomonas campestris pv. vesicatoria), this protein is 1-(5-phosphoribosyl)-5-[(5-phosphoribosylamino)methylideneamino] imidazole-4-carboxamide isomerase.